Here is a 707-residue protein sequence, read N- to C-terminus: MASVFKVRSASGHVPVVRTLAAMMAVTVVLTACHGGGDNHPPPQANVLPAFITASSVRTQFYDGNTDDLLTAGLGKTGLASATAPAIANAAQPTAAELRRLAIWSNYRALVDMTANGGYGRFWGPNVDLNGNDTLGEGKIAGKEYLAFADDGSGTQNVTVLVQIPASFNPDQPCIVTATSSGSRGVYGAISAAGEWGLKRGCAVAYTDKGSGNGAHELSSSLVTLIDGTLQNATAAGKASLFTANLGNTDLASYNSRFPNRYAFKHAHSQQNPEKDWGRNTLQAIQFAYWALNDSYGTLNGSTRNVRYTSGSITTIAASVSNGGGASLAAAEQDTSGLITAVVVGEPQINLRLPAQVSVAQGGVPVGAFGKPLADYMTLANMLQPCAALAPAAAGAPYLTALPGATTTSIRTARCASLAAAGVIAGADATTQATNALALLHQNGYQTDSDLLQAPMWDSQAVPAVAVTYADAYAKASVTANLCNFSFGTTNAAGTAGVTPAVSPMLTVFGNGNGVPPTNGINLVFNSGAGAADHRLATADGSYAGASCLRTLWTNGTLTGSVDAIRVNANLHGKPAIIVQGRADALVPINHASRPYLGLNQLSEGAASRLSFYEVTNAQHFDAFLGVAGFDSRFVPLHYYNLQALNLMWSHLKNGTPLPPSQVIHTVPRGGTPGAAPALTTANLPPIVASPGINAITAANGAVNVPN.

The first 32 residues, 1-32 (MASVFKVRSASGHVPVVRTLAAMMAVTVVLTA), serve as a signal peptide directing secretion. The active-site Charge relay system is serine 321.

This sequence belongs to the D-(-)-3-hydroxybutyrate oligomer hydrolase family.

The protein localises to the secreted. It catalyses the reaction (3R)-hydroxybutanoate dimer + H2O = 2 (R)-3-hydroxybutanoate + H(+). Its pathway is lipid metabolism; butanoate metabolism. Its function is as follows. Participates in the degradation of poly-3-hydroxybutyrate (PHB). It works downstream of poly(3-hydroxybutyrate) depolymerase, hydrolyzing D(-)-3-hydroxybutyrate oligomers of various length (3HB-oligomers) into 3HB-monomers. This chain is D-(-)-3-hydroxybutyrate oligomer hydrolase, found in Paraburkholderia xenovorans (strain LB400).